Consider the following 891-residue polypeptide: Echinoderm microtubule-associated protein-like elp-1 (891 aa).

Polar residues predominate over residues 77-88 (DQSRSPTCSGYS). The interval 77 to 167 (DQSRSPTCSG…ARGSPMRKWV (91 aa)) is disordered. Residues 104–117 (SPSHAPPRSSHANS) show a composition bias toward low complexity. Polar residues predominate over residues 118-131 (KSLYINGMNNNSEE). 9 WD repeats span residues 330–401 (GHTC…TLMV), 404–447 (GFEK…REGE), 499–537 (DKPK…TTKQ), 541–579 (VHPG…RTRR), 626–664 (GDPG…VEFS), 708–747 (EGTA…NLLV), 753–792 (HIPA…CDGT), 816–853 (SSNG…VTAG), and 859–890 (GHGR…EWCL).

It belongs to the WD repeat EMAP family.

It is found in the cytoplasm. Its subcellular location is the cytoskeleton. In terms of biological role, may modify the assembly dynamics of microtubules, such that microtubules are slightly longer, but more dynamic. The protein is Echinoderm microtubule-associated protein-like elp-1 (elp-1) of Caenorhabditis elegans.